The primary structure comprises 223 residues: N-terminal Xaa-Pro-Lys N-methyltransferase 1 (223 aa).

The residue at position 1 (Met1) is an N-acetylmethionine. Thr2 is modified (N-acetylthreonine; in N-terminal Xaa-Pro-Lys N-methyltransferase 1, N-terminally processed). S-adenosyl-L-methionine-binding positions include Gly69, Arg74, 91–93 (DVT), 119–120 (LQ), and Gln135.

It belongs to the methyltransferase superfamily. NTM1 family.

It localises to the nucleus. It catalyses the reaction N-terminal L-alanyl-L-prolyl-L-lysyl-[protein] + 3 S-adenosyl-L-methionine = N-terminal N,N,N-trimethyl-L-alanyl-L-prolyl-L-lysyl-[protein] + 3 S-adenosyl-L-homocysteine + 3 H(+). It carries out the reaction N-terminal L-seryl-L-prolyl-L-lysyl-[protein] + 3 S-adenosyl-L-methionine = N-terminal N,N,N-trimethyl-L-seryl-L-prolyl-L-lysyl-[protein] + 3 S-adenosyl-L-homocysteine + 3 H(+). The enzyme catalyses N-terminal L-prolyl-L-prolyl-L-lysyl-[protein] + 2 S-adenosyl-L-methionine = N-terminal N,N-dimethyl-L-prolyl-L-prolyl-L-lysyl-[protein] + 2 S-adenosyl-L-homocysteine + 2 H(+). Its function is as follows. Distributive alpha-N-methyltransferase that methylates the N-terminus of target proteins containing the N-terminal motif [Ala/Gly/Pro/Ser]-Pro-Lys when the initiator Met is cleaved. Specifically catalyzes mono-, di- or tri-methylation of the exposed alpha-amino group of the Ala, Gly or Ser residue in the [Ala/Gly/Ser]-Pro-Lys motif and mono- or di-methylation of Pro in the Pro-Pro-Lys motif. Some of the substrates may be primed by NTMT2-mediated monomethylation. Catalyzes the trimethylation of the N-terminal Gly in CENPA (after removal of Met-1). Responsible for the N-terminal methylation of KLHL31, MYL2, MYL3, RB1, RCC1, RPL23A and SET. Required during mitosis for normal bipolar spindle formation and chromosome segregation via its action on RCC1. The protein is N-terminal Xaa-Pro-Lys N-methyltransferase 1 (Ntmt1) of Rattus norvegicus (Rat).